The chain runs to 446 residues: Glutamyl-tRNA reductase (446 aa).

Residues 49–52 (TCNR), Ser-109, 114–116 (ETQ), and Gln-120 each bind substrate. Cys-50 functions as the Nucleophile in the catalytic mechanism. 189-194 (GAGKMG) contacts NADP(+).

Belongs to the glutamyl-tRNA reductase family. As to quaternary structure, homodimer.

It catalyses the reaction (S)-4-amino-5-oxopentanoate + tRNA(Glu) + NADP(+) = L-glutamyl-tRNA(Glu) + NADPH + H(+). It participates in porphyrin-containing compound metabolism; protoporphyrin-IX biosynthesis; 5-aminolevulinate from L-glutamyl-tRNA(Glu): step 1/2. In terms of biological role, catalyzes the NADPH-dependent reduction of glutamyl-tRNA(Glu) to glutamate 1-semialdehyde (GSA). This is Glutamyl-tRNA reductase from Priestia megaterium (Bacillus megaterium).